We begin with the raw amino-acid sequence, 193 residues long: Peptidyl-tRNA hydrolase (193 aa).

H17 contacts tRNA. H22 serves as the catalytic Proton acceptor. Residues F68, N70, and N116 each coordinate tRNA.

The protein belongs to the PTH family. Monomer.

The protein localises to the cytoplasm. It carries out the reaction an N-acyl-L-alpha-aminoacyl-tRNA + H2O = an N-acyl-L-amino acid + a tRNA + H(+). Hydrolyzes ribosome-free peptidyl-tRNAs (with 1 or more amino acids incorporated), which drop off the ribosome during protein synthesis, or as a result of ribosome stalling. Its function is as follows. Catalyzes the release of premature peptidyl moieties from peptidyl-tRNA molecules trapped in stalled 50S ribosomal subunits, and thus maintains levels of free tRNAs and 50S ribosomes. This Xanthomonas euvesicatoria pv. vesicatoria (strain 85-10) (Xanthomonas campestris pv. vesicatoria) protein is Peptidyl-tRNA hydrolase.